A 999-amino-acid chain; its full sequence is MFFFRFLTTVLLLFNAKLLVAQSSNTSSPVHWDKYSLSINGERLFVFAGEFHYIRLPVPELWLDVFQKLKANGFNAISVYFYWNHHSASEGVYDFETGGHNVQRLFDYAKQAGVYIIARPGPYANGELSAGGYALWAANGRLGGERTRDSQYYDLWSPWMTKIGKIIAANQITEGGPVILVQHENELQETTHRANNTLVLYMEQITQILDAAGIVVPSTHNEKGMRSMSWSMDYEDVGGAVNIYGLDSYPGGLSCTNPNAGFNLIRTYYQWFQNYSYTQPEYLAEFQGGYFTPWGGVFYDDCASMLQPEYADVFYKNNIGNRVTLQSLYMAYGGTNWGHIAAPVVYTSYDYSAPLRETREIRDKLKQTKLLGLFTRVSPDLLQTEMEGNGTSYTTGANIFTWALRNPETNAGFYVVAQDDSSSTTDVVFDLEVETSAGSVNITNIGLDGRQSKIITTDYKVGDTTLLYCSADILTYATLDVDVLALYLNKGQTGTFVLANAASHLKYTVYGNSTVTSSNSSQGTIYTYTQGQGISAIKFSNRFLVYLLDKYTAWDFFAPPLQLSDPNVKPNEHIFVIGPYLVREATIKGRTLELTGDNQNTTSIEIYHGNPFITSITWNGKHLSTKRTAYGSLTATIPGAEAITITLPKLTSWKSHDMIPEIDPEYDDSNWVVCNKTTSFNAIAPLSLPVLYSGDYGYHAGPKIYRGRFGSTNATGVTVTAQNGNAAGWSAWLNGIYIGGVTGDPSIEATSAVLKFNSSTTLKQEGSENVLTVLVDYTGHDEDNVKPARAQNPRGLLGVIFEGSTSTNFTSWKLQGNAGGEKNIDALRGPMNEGGFYGERLGWHLPGFEPSTKSGWDTRAPSDGVDGGSHRFYITEFTLDLGPNSHALDVPIGIHLNASSTSGPAVAYVWLNGYKFAHYLPHIGPQTVFPFQPGVLNIQGSEGHKRKNTLAVSLWALTDQPAALDVVELVAYGKYTSSFDFARDWSYLQPRWVDRSKYA.

A signal peptide spans 1-21; sequence MFFFRFLTTVLLLFNAKLLVA. Asparagine 25 carries N-linked (GlcNAc...) asparagine glycosylation. Residues tyrosine 80, asparagine 125, glutamate 127, and asparagine 185 each coordinate substrate. Glutamate 186 functions as the Proton donor in the catalytic mechanism. N-linked (GlcNAc...) asparagine glycosylation occurs at asparagine 195. Tyrosine 249 lines the substrate pocket. A disulfide bond links cysteine 255 and cysteine 302. Asparagine 274 carries an N-linked (GlcNAc...) asparagine glycan. Glutamate 285 acts as the Nucleophile in catalysis. A substrate-binding site is contributed by tyrosine 351. Residues asparagine 389, asparagine 441, asparagine 512, asparagine 519, asparagine 600, asparagine 675, asparagine 713, asparagine 757, asparagine 808, and asparagine 897 are each glycosylated (N-linked (GlcNAc...) asparagine).

It belongs to the glycosyl hydrolase 35 family.

The protein resides in the secreted. The catalysed reaction is Hydrolysis of terminal non-reducing beta-D-galactose residues in beta-D-galactosides.. In terms of biological role, cleaves beta-linked terminal galactosyl residues from gangliosides, glycoproteins, and glycosaminoglycans. The sequence is that of Probable beta-galactosidase C (lacC) from Talaromyces marneffei (strain ATCC 18224 / CBS 334.59 / QM 7333) (Penicillium marneffei).